We begin with the raw amino-acid sequence, 782 residues long: Cysteine-rich protein 2-binding protein (782 aa).

Ser-4 carries the post-translational modification Phosphoserine. A disordered region spans residues Arg-13–Glu-33. Lys-231 is subject to N6-acetyllysine. Residues Pro-251 to Leu-282 form a disordered region. The segment covering Met-256–Lys-276 has biased composition (basic and acidic residues). At Ser-285 the chain carries Phosphoserine. Lys-292 carries the N6-acetyllysine modification. Positions Leu-315–Ser-335 are enriched in low complexity. 2 disordered regions span residues Leu-315–Thr-346 and Val-400–Tyr-460. Basic and acidic residues-rich tracts occupy residues Arg-405–Ile-426 and Lys-446–Arg-459. At Ser-416 the chain carries Phosphoserine. Positions Leu-638 to Arg-782 constitute an N-acetyltransferase domain.

In terms of assembly, interacts with the LIM 1 domain of CSRP2. Component of the ADA2A-containing complex (ATAC), composed of CSRP2BP, KAT2A, TADA2L, TADA3L, ZZ3, MBIP, WDR5, YEATS2, CCDC101 and DR1. In the complex, it probably interacts directly with KAT2A, MBIP and WDR5. In terms of tissue distribution, expressed in skeletal muscle, heart, lung, placenta, brain, liver, pancreas and kidney. High expression in skeletal muscle and heart. Lower expression in lung.

The protein resides in the nucleus. It is found in the cytoplasm. Its function is as follows. Component of the ATAC complex, a complex with histone acetyltransferase activity on histones H3 and H4. May function as a scaffold for the ATAC complex to promote ATAC complex stability. Has also weak histone acetyltransferase activity toward histone H4. Required for the normal progression through G1 and G2/M phases of the cell cycle. In Homo sapiens (Human), this protein is Cysteine-rich protein 2-binding protein.